Reading from the N-terminus, the 41-residue chain is uncharacterized protein (41 aa).

This is an uncharacterized protein from Bacillus subtilis (strain 168).